A 248-amino-acid chain; its full sequence is 14-3-3 protein gamma-2 (248 aa).

It belongs to the 14-3-3 family. As to quaternary structure, homodimer, and heterodimer with other family members. Expressed in brain, gill, heart, intestine, kidney, liver, ovary, skeletal muscle, spleen and testis.

The protein resides in the cytoplasm. In terms of biological role, adapter protein implicated in the regulation of a large spectrum of both general and specialized signaling pathways. Binds to a large number of partners, usually by recognition of a phosphoserine or phosphothreonine motif. Binding generally results in the modulation of the activity of the binding partner. The protein is 14-3-3 protein gamma-2 of Oncorhynchus mykiss (Rainbow trout).